A 604-amino-acid polypeptide reads, in one-letter code: Nuclear cap-binding protein subunit 3 (604 aa).

The segment at 1–36 (MAAVRGLRISVKAEATATTAEPRGPEPEPMEVEEGE) is disordered. The interval 116–177 (DTIYICGVDE…MSSFPDQEKP (62 aa)) is RNA recognition motif (RRM) domain. A WLDD motif; essential for 7-methylguanosine-containing mRNA cap binding motif is present at residues 145-148 (WLDD). Disordered regions lie at residues 168–219 (MSSF…DIEL), 319–383 (KHRH…DSDE), and 457–604 (QNNN…DTES). Residues 173-198 (DQEKPKGGENNEEKTAEKNKKEKQEE) show a composition bias toward basic and acidic residues. 2 stretches are compositionally biased toward acidic residues: residues 199–219 (STDDETEEGEVEDENPSDIEL) and 331–349 (EPIEEEEEEEEVQDMDEDD). The span at 350-370 (RVVVEYRDDLQPFKQSRDRGA) shows a compositional bias: basic and acidic residues. Over residues 458-469 (NNNGLRQPNSIV) the composition is skewed to polar residues. Composition is skewed to basic and acidic residues over residues 495 to 505 (PRREPISDVHS), 539 to 548 (TQEKTSDKPE), and 569 to 582 (IKEKGESRQKKSRL). Positions 595–604 (ESSSGSDTES) are enriched in low complexity.

Belongs to the NCBP3 family. Component of an alternative cap-binding complex (CBC) composed of NCBP1/CBP80 and NCBP3.

It localises to the nucleus. It is found in the cytoplasm. Associates with NCBP1/CBP80 to form an alternative cap-binding complex (CBC) which plays a key role in mRNA export. NCBP3 serves as adapter protein linking the capped RNAs (m7GpppG-capped RNA) to NCBP1/CBP80. Unlike the conventional CBC with NCBP2 which binds both small nuclear RNA (snRNA) and messenger (mRNA) and is involved in their export from the nucleus, the alternative CBC with NCBP3 does not bind snRNA and associates only with mRNA thereby playing a role in only mRNA export. This chain is Nuclear cap-binding protein subunit 3, found in Gallus gallus (Chicken).